A 513-amino-acid polypeptide reads, in one-letter code: ATP synthase subunit alpha (513 aa).

ATP is bound at residue 169-176 (GDRQTGKT).

Belongs to the ATPase alpha/beta chains family. As to quaternary structure, F-type ATPases have 2 components, CF(1) - the catalytic core - and CF(0) - the membrane proton channel. CF(1) has five subunits: alpha(3), beta(3), gamma(1), delta(1), epsilon(1). CF(0) has three main subunits: a(1), b(2) and c(9-12). The alpha and beta chains form an alternating ring which encloses part of the gamma chain. CF(1) is attached to CF(0) by a central stalk formed by the gamma and epsilon chains, while a peripheral stalk is formed by the delta and b chains.

The protein localises to the cell membrane. It carries out the reaction ATP + H2O + 4 H(+)(in) = ADP + phosphate + 5 H(+)(out). Functionally, produces ATP from ADP in the presence of a proton gradient across the membrane. The alpha chain is a regulatory subunit. The polypeptide is ATP synthase subunit alpha (Polynucleobacter asymbioticus (strain DSM 18221 / CIP 109841 / QLW-P1DMWA-1) (Polynucleobacter necessarius subsp. asymbioticus)).